Consider the following 124-residue polypeptide: Large ribosomal subunit protein bL12 (124 aa).

Belongs to the bacterial ribosomal protein bL12 family. As to quaternary structure, homodimer. Part of the ribosomal stalk of the 50S ribosomal subunit. Forms a multimeric L10(L12)X complex, where L10 forms an elongated spine to which 2 to 4 L12 dimers bind in a sequential fashion. Binds GTP-bound translation factors.

Its function is as follows. Forms part of the ribosomal stalk which helps the ribosome interact with GTP-bound translation factors. Is thus essential for accurate translation. The polypeptide is Large ribosomal subunit protein bL12 (Sulfurovum sp. (strain NBC37-1)).